An 878-amino-acid chain; its full sequence is Alanine--tRNA ligase (878 aa).

4 residues coordinate Zn(2+): histidine 567, histidine 571, cysteine 669, and histidine 673.

It belongs to the class-II aminoacyl-tRNA synthetase family. Zn(2+) is required as a cofactor.

The protein localises to the cytoplasm. It carries out the reaction tRNA(Ala) + L-alanine + ATP = L-alanyl-tRNA(Ala) + AMP + diphosphate. Its function is as follows. Catalyzes the attachment of alanine to tRNA(Ala) in a two-step reaction: alanine is first activated by ATP to form Ala-AMP and then transferred to the acceptor end of tRNA(Ala). Also edits incorrectly charged Ser-tRNA(Ala) and Gly-tRNA(Ala) via its editing domain. In Rickettsia felis (strain ATCC VR-1525 / URRWXCal2) (Rickettsia azadi), this protein is Alanine--tRNA ligase.